The sequence spans 208 residues: Protein TIC 20-II, chloroplastic (208 aa).

The N-terminal 49 residues, 1–49, are a transit peptide targeting the chloroplast; that stretch reads MASLCLSLHQTLTNPLSAPRCRPLSLSFPGSSTFSIRPSSRRATALTTR. Helical transmembrane passes span 61–83, 101–121, 134–154, and 172–192; these read VISI…FLFA, LYRS…LGVV, AMQA…TRIL, and TGVF…SLLG.

It belongs to the Tic20 family. As to quaternary structure, part of the Tic complex. Expressed in leaves, siliques and roots.

It localises to the plastid. The protein resides in the chloroplast inner membrane. Functionally, may be involved in protein precursor import into chloroplasts. Not redundant with TIC20-I, TIC20-IV or TIC20-V. The chain is Protein TIC 20-II, chloroplastic (TIC20-II) from Arabidopsis thaliana (Mouse-ear cress).